Reading from the N-terminus, the 592-residue chain is RNA-binding protein 47 (592 aa).

The segment covering 1-24 (MTAEDAAAAMSSDSAAGGAASAKA) has biased composition (low complexity). Residues 1–26 (MTAEDAAAAMSSDSAAGGAASAKAPE) are disordered. RRM domains follow at residues 73–151 (CEVF…CSVD), 153–235 (CRLF…WAEP), and 248–320 (KILY…LAKP). Asymmetric dimethylarginine; alternate is present on residues R397 and R408. 2 positions are modified to omega-N-methylarginine; alternate: R397 and R408.

Belongs to the RRM RBM47 family. In terms of assembly, homodimer. Interacts with A1CF. Interacts with APOBEC1; form an mRNA editing complex. Interacts with RBPMS.

Its subcellular location is the nucleus. The protein localises to the cytoplasm. In terms of biological role, single-stranded RNA-binding protein that functions in a variety of RNA processes, including alternative splicing, RNA stabilization, and RNA editing. Functions as an enzyme-substrate adapter for the cytidine deaminase APOBEC1. With APOBEC1 forms an mRNA editing complex involved into cytidine to uridine editing of a variety of mRNA molecules. Through the binding of their 3'UTR, also stabilizes a variety of mRNAs and regulates the expression of genes such as the interferon alpha/beta receptor and interleukin-10. Also involved in the alternative splicing of several genes including TJP1. Binds the pre-mRNA (U)GCAUG consensus sequences in downstream intronic regions of alternative exons, regulating their exclusion and inclusion into mRNAs. Independently of its RNA-binding activity, could negatively regulate MAVS by promoting its lysosomal degradation. The polypeptide is RNA-binding protein 47 (Canis lupus familiaris (Dog)).